A 1071-amino-acid chain; its full sequence is Exportin-1 (1071 aa).

Positions 46 to 112 (AQEVLTHLKE…KKYVVGLIIK (67 aa)) constitute an Importin N-terminal domain. 6 HEAT repeats span residues 217–240 (QNAP…PLGY), 241–277 (IFET…VSVS), 354–472 (MLLV…YVDT), 515–553 (RFLV…QYPR), 560–597 (KFLK…KCRR), and 602–639 (VQVG…AVGY). A necessary for interaction with Ran and nuclear export complex formation region spans residues 327–450 (CTFLKEHGQL…VREFMKDTDS (124 aa)). Ser-391 is modified (phosphoserine). The necessary for interaction with RANBP3 stretch occupies residues 411–481 (TVLSKVRLLM…TEIIMTKKLQ (71 aa)). Lys-446 is modified (N6-acetyllysine). At Thr-448 the chain carries Phosphothreonine. Position 450 is a phosphoserine (Ser-450). Tyr-454 carries the phosphotyrosine modification. An N6-acetyllysine modification is found at Lys-693. HEAT repeat units follow at residues 775 to 813 (NFVP…KLGG), 885 to 916 (TMRN…SFYQ), and 917 to 954 (TYFC…NLVE). Phosphoserine is present on residues Ser-966 and Ser-1031. The HEAT 10 repeat unit spans residues 1002-1039 (FSLNQDIPAFKEHLRDFLVQIKEFAGEDTSDLFLEERE).

The protein belongs to the exportin family. Found in a U snRNA export complex with PHAX/RNUXA, NCBP1/CBP80, NCBP2/CBP20, RAN, XPO1 and m7G-capped RNA. Component of a nuclear export receptor complex composed of KPNB1, RAN, SNUPN and XPO1. Found in a trimeric export complex with SNUPN, RAN and XPO1. Found in a nuclear export complex with RANBP3 and RAN. Found in a 60S ribosomal subunit export complex with NMD3, RAN, XPO1. Interacts with DDX3X, NMD3, NUP42, NUP88, NUP214, RANBP3 and TERT. Interacts with NEMF (via its N-terminus). Interacts with the monomeric form of BIRC5/survivin deacetylated at 'Lys-129'. Interacts with DTNBP1 and SERTAD2; the interactions translocate DTNBP1 and SERTAD2 out of the nucleus. Interacts with ATF2. Interacts with SLC35G1 and STIM1. Interacts with DCAF8. Interacts with CPEB3. Interacts with HAX1. Interacts with BOK; translocates to the cytoplasm. Interacts with HSP90AB1. Interacts with LRPPRC; interacts with LRPPRC alone and also when LRPPRC is in complex with EIF4E and with EIF4E sensitivity element (4ESE)-containing mRNAs to form an EIF4E-dependent mRNA export complex.

It localises to the cytoplasm. The protein resides in the nucleus. Its subcellular location is the nucleoplasm. The protein localises to the cajal body. It is found in the nucleolus. In terms of biological role, mediates the nuclear export of cellular proteins (cargos) bearing a leucine-rich nuclear export signal (NES) and of RNAs. In the nucleus, in association with RANBP3, binds cooperatively to the NES on its target protein and to the GTPase Ran in its active GTP-bound form. Docking of this complex to the nuclear pore complex (NPC) is mediated through binding to nucleoporins. Upon transit of a nuclear export complex into the cytoplasm, disassembling of the complex and hydrolysis of Ran-GTP to Ran-GDP (induced by RANBP1 and RANGAP1, respectively) cause release of the cargo from the export receptor. The directionality of nuclear export is thought to be conferred by an asymmetric distribution of the GTP- and GDP-bound forms of Ran between the cytoplasm and nucleus. Involved in U3 snoRNA transport from Cajal bodies to nucleoli. Binds to late precursor U3 snoRNA bearing a TMG cap. This chain is Exportin-1 (Xpo1), found in Rattus norvegicus (Rat).